A 411-amino-acid chain; its full sequence is Putative competence-damage inducible protein (411 aa).

This sequence belongs to the CinA family.

The protein is Putative competence-damage inducible protein of Clostridium acetobutylicum (strain ATCC 824 / DSM 792 / JCM 1419 / IAM 19013 / LMG 5710 / NBRC 13948 / NRRL B-527 / VKM B-1787 / 2291 / W).